Reading from the N-terminus, the 340-residue chain is Methionine import ATP-binding protein MetN (340 aa).

Residues 6-245 enclose the ABC transporter domain; it reads IEFEGITKVF…PQTNVAKRFV (240 aa). 42–49 contacts ATP; sequence GYSGAGKS.

Belongs to the ABC transporter superfamily. Methionine importer (TC 3.A.1.24) family. The complex is composed of two ATP-binding proteins (MetN), two transmembrane proteins (MetI) and a solute-binding protein (MetQ).

It is found in the cell membrane. The enzyme catalyses L-methionine(out) + ATP + H2O = L-methionine(in) + ADP + phosphate + H(+). It carries out the reaction D-methionine(out) + ATP + H2O = D-methionine(in) + ADP + phosphate + H(+). In terms of biological role, part of the ABC transporter complex MetNIQ involved in methionine import. Responsible for energy coupling to the transport system. The chain is Methionine import ATP-binding protein MetN from Corynebacterium diphtheriae (strain ATCC 700971 / NCTC 13129 / Biotype gravis).